The primary structure comprises 248 residues: Probable transcriptional regulatory protein BRADO1143 (248 aa).

The protein belongs to the TACO1 family.

Its subcellular location is the cytoplasm. The sequence is that of Probable transcriptional regulatory protein BRADO1143 from Bradyrhizobium sp. (strain ORS 278).